Reading from the N-terminus, the 281-residue chain is Tryptophan 2,3-dioxygenase (281 aa).

Substrate-binding positions include Phe-50–His-54, Tyr-112, and Arg-116. His-239 lines the heme pocket. Residue Thr-253 coordinates substrate.

Belongs to the tryptophan 2,3-dioxygenase family. Homotetramer. It depends on heme as a cofactor.

It catalyses the reaction L-tryptophan + O2 = N-formyl-L-kynurenine. It functions in the pathway amino-acid degradation; L-tryptophan degradation via kynurenine pathway; L-kynurenine from L-tryptophan: step 1/2. Its function is as follows. Heme-dependent dioxygenase that catalyzes the oxidative cleavage of the L-tryptophan (L-Trp) pyrrole ring and converts L-tryptophan to N-formyl-L-kynurenine. Catalyzes the oxidative cleavage of the indole moiety. The polypeptide is Tryptophan 2,3-dioxygenase (Saccharopolyspora erythraea (strain ATCC 11635 / DSM 40517 / JCM 4748 / NBRC 13426 / NCIMB 8594 / NRRL 2338)).